A 321-amino-acid polypeptide reads, in one-letter code: tRNA pseudouridine synthase B (321 aa).

Catalysis depends on aspartate 47, which acts as the Nucleophile.

It belongs to the pseudouridine synthase TruB family. Type 1 subfamily.

It catalyses the reaction uridine(55) in tRNA = pseudouridine(55) in tRNA. Functionally, responsible for synthesis of pseudouridine from uracil-55 in the psi GC loop of transfer RNAs. The protein is tRNA pseudouridine synthase B of Shewanella baltica (strain OS185).